The sequence spans 103 residues: Large ribosomal subunit protein bL21 (103 aa).

It belongs to the bacterial ribosomal protein bL21 family. In terms of assembly, part of the 50S ribosomal subunit. Contacts protein L20.

Its function is as follows. This protein binds to 23S rRNA in the presence of protein L20. This Acidovorax ebreus (strain TPSY) (Diaphorobacter sp. (strain TPSY)) protein is Large ribosomal subunit protein bL21.